The primary structure comprises 249 residues: Probable transcriptional regulatory protein Wbm0670 (249 aa).

The protein belongs to the TACO1 family.

The protein localises to the cytoplasm. This is Probable transcriptional regulatory protein Wbm0670 from Wolbachia sp. subsp. Brugia malayi (strain TRS).